The following is a 223-amino-acid chain: Global nitrogen regulator (223 aa).

Positions 143–216 (RDMGSRLVSF…KKKITVHKPV (74 aa)) constitute an HTH crp-type domain. Positions 176 to 195 (HQAIAEAIGSTRVTVTRLLG) form a DNA-binding region, H-T-H motif.

In terms of biological role, required for full expression of proteins subject to ammonium repression. Transcriptional activator of genes subject to nitrogen control. Functionally, has affinity for the xisA upstream region. Binds to a 66 bp region containing three repeats of the consensus recognition sequence 5'-ACATT-3'. The chain is Global nitrogen regulator (ntcA) from Nostoc sp. (strain PCC 7120 / SAG 25.82 / UTEX 2576).